Consider the following 430-residue polypeptide: Glutamate-1-semialdehyde 2,1-aminomutase (430 aa).

Lysine 265 carries the post-translational modification N6-(pyridoxal phosphate)lysine.

Belongs to the class-III pyridoxal-phosphate-dependent aminotransferase family. HemL subfamily. Homodimer. Pyridoxal 5'-phosphate is required as a cofactor.

The protein resides in the cytoplasm. The enzyme catalyses (S)-4-amino-5-oxopentanoate = 5-aminolevulinate. It functions in the pathway porphyrin-containing compound metabolism; protoporphyrin-IX biosynthesis; 5-aminolevulinate from L-glutamyl-tRNA(Glu): step 2/2. This is Glutamate-1-semialdehyde 2,1-aminomutase from Helicobacter pylori (strain HPAG1).